Consider the following 221-residue polypeptide: ATP-dependent dethiobiotin synthetase BioD (221 aa).

An ATP-binding site is contributed by 13 to 18; that stretch reads DIGKTY. Residue T17 coordinates Mg(2+). Residue K38 is part of the active site. S42 provides a ligand contact to substrate. Residues D51, 112–115, and 176–177 contribute to the ATP site; these read EGSG and NR. The Mg(2+) site is built by D51 and E112.

This sequence belongs to the dethiobiotin synthetase family. As to quaternary structure, homodimer. Mg(2+) is required as a cofactor.

It is found in the cytoplasm. It catalyses the reaction (7R,8S)-7,8-diammoniononanoate + CO2 + ATP = (4R,5S)-dethiobiotin + ADP + phosphate + 3 H(+). Its pathway is cofactor biosynthesis; biotin biosynthesis; biotin from 7,8-diaminononanoate: step 1/2. In terms of biological role, catalyzes a mechanistically unusual reaction, the ATP-dependent insertion of CO2 between the N7 and N8 nitrogen atoms of 7,8-diaminopelargonic acid (DAPA, also called 7,8-diammoniononanoate) to form a ureido ring. The polypeptide is ATP-dependent dethiobiotin synthetase BioD (Brachyspira hyodysenteriae (strain ATCC 49526 / WA1)).